The following is a 209-amino-acid chain: Small ribosomal subunit protein eS1 (209 aa).

It belongs to the eukaryotic ribosomal protein eS1 family.

This is Small ribosomal subunit protein eS1 from Picrophilus torridus (strain ATCC 700027 / DSM 9790 / JCM 10055 / NBRC 100828 / KAW 2/3).